We begin with the raw amino-acid sequence, 736 residues long: Peroxisomal multifunctional enzyme type 2 (736 aa).

The tract at residues 1 to 305 (MGSPLRFDGR…IEVLSKIDSE (305 aa)) is (3R)-hydroxyacyl-CoA dehydrogenase. NAD(+) contacts are provided by residues 13 to 37 (LVTGAGAGLGRAYALAFAERGALVV), Leu-21, and Asp-40. The residue at position 46 (Lys-46) is an N6-acetyllysine; alternate. Residue Lys-46 is modified to N6-succinyllysine; alternate. Ser-52 bears the Phosphoserine mark. An N6-succinyllysine mark is found at Lys-57 and Lys-68. 75-76 (SV) is a binding site for NAD(+). The residue at position 84 (Lys-84) is an N6-succinyllysine. Residue Asn-99 participates in NAD(+) binding. Ser-151 serves as a coordination point for substrate. Tyr-164 (proton acceptor) is an active-site residue. NAD(+)-binding positions include 164-168 (YSAAK) and 196-199 (AGSR). Thr-265 carries the post-translational modification Phosphothreonine. Position 275 is an N6-succinyllysine (Lys-275). 2 positions are modified to phosphoserine: Ser-304 and Ser-309. Residues 322-622 (SGFAGAIGQK…AKTPSEGGKL (301 aa)) form an enoyl-CoA hydratase 2 region. At Lys-356 the chain carries N6-succinyllysine. 406–407 (HG) lines the (3R)-3-hydroxydecanoyl-CoA pocket. Lys-424 bears the N6-succinyllysine mark. Residues Lys-435, 510–515 (DWNPLH), Gly-533, and Phe-563 contribute to the (3R)-3-hydroxydecanoyl-CoA site. Residues 484 to 600 (IPNRPPDAVL…QETGDIVISN (117 aa)) form the MaoC-like domain. Lys-565 is modified (N6-acetyllysine). Lys-579 and Lys-663 each carry N6-succinyllysine. Residues 624–736 (STFVFEEIGR…QMILKDYAKL (113 aa)) enclose the SCP2 domain. Lys-669 carries the post-translational modification N6-acetyllysine. Gln-706 serves as a coordination point for substrate. At Lys-707 the chain carries N6-acetyllysine. Gln-724 contributes to the substrate binding site. Lys-725 is modified (N6-succinyllysine). Residues 734 to 736 (AKL) carry the Microbody targeting signal motif.

This sequence belongs to the short-chain dehydrogenases/reductases (SDR) family. Homodimer. Present in many tissues with highest concentrations in liver, heart, prostate and testis.

The protein resides in the peroxisome. It carries out the reaction a (3R)-3-hydroxyacyl-CoA + NAD(+) = a 3-oxoacyl-CoA + NADH + H(+). The catalysed reaction is a (3R)-3-hydroxyacyl-CoA = a (2E)-enoyl-CoA + H2O. The enzyme catalyses (24R,25R)-3alpha,7alpha,12alpha,24-tetrahydroxy-5beta-cholestan-26-oyl-CoA = (24E)-3alpha,7alpha,12alpha-trihydroxy-5beta-cholest-24-en-26-oyl-CoA + H2O. It catalyses the reaction (2E)-octenoyl-CoA + H2O = (3R)-hydroxyoctanoyl-CoA. It carries out the reaction (3R)-hydroxyoctanoyl-CoA + NAD(+) = 3-oxooctanoyl-CoA + NADH + H(+). The catalysed reaction is (3R)-hydroxyhexadecanoyl-CoA + NAD(+) = 3-oxohexadecanoyl-CoA + NADH + H(+). The enzyme catalyses (2E)-hexadecenedioyl-CoA + H2O = (3R)-hydroxyhexadecanedioyl-CoA. It catalyses the reaction (3R)-hydroxyhexadecanedioyl-CoA + NAD(+) = 3-oxohexadecanedioyl-CoA + NADH + H(+). It carries out the reaction (3R)-hydroxyhexadecanoyl-CoA = (2E)-hexadecenoyl-CoA + H2O. The catalysed reaction is (3R)-3-hydroxydecanoyl-CoA = (2E)-decenoyl-CoA + H2O. The enzyme catalyses (3R)-3-hydroxydecanoyl-CoA + NAD(+) = 3-oxodecanoyl-CoA + NADH + H(+). It catalyses the reaction (24R,25R)-3alpha,7alpha,12alpha,24-tetrahydroxy-5beta-cholestan-26-oyl-CoA + NAD(+) = 3alpha,7alpha,12alpha-trihydroxy-24-oxo-5beta-cholestan-26-oyl-CoA + NADH + H(+). The protein operates within lipid metabolism; fatty acid beta-oxidation. Functionally, bifunctional enzyme acting on the peroxisomal fatty acid beta-oxidation pathway. Catalyzes two of the four reactions in fatty acid degradation: hydration of 2-enoyl-CoA (trans-2-enoyl-CoA) to produce (3R)-3-hydroxyacyl-CoA, and dehydrogenation of (3R)-3-hydroxyacyl-CoA to produce 3-ketoacyl-CoA (3-oxoacyl-CoA), which is further metabolized by SCPx. Can use straight-chain and branched-chain fatty acids, as well as bile acid intermediates as substrates. The chain is Peroxisomal multifunctional enzyme type 2 from Homo sapiens (Human).